Consider the following 206-residue polypeptide: High-affinity nitrate transporter-activating protein 2.1 (206 aa).

Positions 1–27 (MARLAGVAALSLVLVLLGAGVPRPAAA) are cleaved as a signal peptide. A helical transmembrane segment spans residues 180–200 (VAAGVFSTFSIAALAFFFVVE).

Belongs to the NAR2 family. In terms of assembly, heterotetramer composed of two NRT2.1, NRT2.2 or NRT2.3 and two NAR2.1. Interacts with NRT2.1, NRT2.2 and isoform 1 of NRT2.3. As to expression, expressed in epidermal cells of primary and lateral roots, root-shoot junction zone, vascular tissues of adventitious root primordia, stems and coleoptiles of germinating seeds.

It localises to the cell membrane. Acts as a dual component transporter with NTR2.1, NRT2.2 and NRT2.3. Required for high-affinity nitrate transport. Involved in the regulation of NRT2.1, NRT2.2 and NRT2.3 expression, and in both, HATS (high-affinity transport system) and LATS (low-affinity transport system) activities in plant roots. Imports nitrate with high affinity when expressed with NTR2.1, NTR2.2 or NTR2.3 in a heterologous system (Xenopus oocytes). The sequence is that of High-affinity nitrate transporter-activating protein 2.1 (NAR2.1) from Oryza sativa subsp. japonica (Rice).